The following is a 207-amino-acid chain: Small ribosomal subunit protein uS4 (207 aa).

One can recognise an S4 RNA-binding domain in the interval 96 to 156 (RRLDNVVYRL…EKFKTSSFIA (61 aa)).

This sequence belongs to the universal ribosomal protein uS4 family. As to quaternary structure, part of the 30S ribosomal subunit. Contacts protein S5. The interaction surface between S4 and S5 is involved in control of translational fidelity.

One of the primary rRNA binding proteins, it binds directly to 16S rRNA where it nucleates assembly of the body of the 30S subunit. Its function is as follows. With S5 and S12 plays an important role in translational accuracy. In Leptospira interrogans serogroup Icterohaemorrhagiae serovar copenhageni (strain Fiocruz L1-130), this protein is Small ribosomal subunit protein uS4.